A 1324-amino-acid polypeptide reads, in one-letter code: DNA-directed RNA polymerase subunit beta' (1324 aa).

Zn(2+)-binding residues include Cys219, Cys292, Cys299, and Cys302. The segment at 1293–1324 is disordered; sequence ARDFEFASSDVEEDELTEEDDDYGDEEEEDAF. Residues 1302-1324 show a composition bias toward acidic residues; the sequence is DVEEDELTEEDDDYGDEEEEDAF.

Belongs to the RNA polymerase beta' chain family. RpoC2 subfamily. In cyanobacteria the RNAP catalytic core is composed of 2 alpha, 1 beta, 1 beta', 1 gamma and 1 omega subunit. When a sigma factor is associated with the core the holoenzyme is formed, which can initiate transcription. Zn(2+) is required as a cofactor.

The catalysed reaction is RNA(n) + a ribonucleoside 5'-triphosphate = RNA(n+1) + diphosphate. Functionally, DNA-dependent RNA polymerase catalyzes the transcription of DNA into RNA using the four ribonucleoside triphosphates as substrates. This Thermosynechococcus vestitus (strain NIES-2133 / IAM M-273 / BP-1) protein is DNA-directed RNA polymerase subunit beta'.